Reading from the N-terminus, the 353-residue chain is UDP-N-acetylglucosamine--N-acetylmuramyl-(pentapeptide) pyrophosphoryl-undecaprenol N-acetylglucosamine transferase (353 aa).

UDP-N-acetyl-alpha-D-glucosamine contacts are provided by residues 10-12 (TGG), Asn124, Ser183, and Gln283.

It belongs to the glycosyltransferase 28 family. MurG subfamily.

The protein localises to the cell inner membrane. The enzyme catalyses di-trans,octa-cis-undecaprenyl diphospho-N-acetyl-alpha-D-muramoyl-L-alanyl-D-glutamyl-meso-2,6-diaminopimeloyl-D-alanyl-D-alanine + UDP-N-acetyl-alpha-D-glucosamine = di-trans,octa-cis-undecaprenyl diphospho-[N-acetyl-alpha-D-glucosaminyl-(1-&gt;4)]-N-acetyl-alpha-D-muramoyl-L-alanyl-D-glutamyl-meso-2,6-diaminopimeloyl-D-alanyl-D-alanine + UDP + H(+). Its pathway is cell wall biogenesis; peptidoglycan biosynthesis. Functionally, cell wall formation. Catalyzes the transfer of a GlcNAc subunit on undecaprenyl-pyrophosphoryl-MurNAc-pentapeptide (lipid intermediate I) to form undecaprenyl-pyrophosphoryl-MurNAc-(pentapeptide)GlcNAc (lipid intermediate II). This is UDP-N-acetylglucosamine--N-acetylmuramyl-(pentapeptide) pyrophosphoryl-undecaprenol N-acetylglucosamine transferase from Helicobacter acinonychis (strain Sheeba).